The chain runs to 122 residues: MIQMQSRLDVADNTGAKSVMCIKVLGGSKRRYAGIGDVIKVSIKDAAPRGRVKKGEVYNAVVVRTAKGVRRQDGSLVKFDGNAAVLLNAKLEPIGTRIFGPVTRELRTERFMKIVSLAPEVL.

It belongs to the universal ribosomal protein uL14 family. In terms of assembly, part of the 50S ribosomal subunit. Forms a cluster with proteins L3 and L19. In the 70S ribosome, L14 and L19 interact and together make contacts with the 16S rRNA in bridges B5 and B8.

Binds to 23S rRNA. Forms part of two intersubunit bridges in the 70S ribosome. The polypeptide is Large ribosomal subunit protein uL14 (Leptothrix cholodnii (strain ATCC 51168 / LMG 8142 / SP-6) (Leptothrix discophora (strain SP-6))).